The sequence spans 201 residues: MNEKIELSLCDVLSLSKTPGERVTSLFELMQDHGQSFYDESVTQLEHALQAAHLAKTSHATMEQITAALLHDIGHFLMDEHDEQNHFLAEDWQHETVGAQQLAPFFGKAVTEPIFLHVPAKRYLCSVNADYFNGLSRASQRSYELQGGLMTDAEIAEFEQNPFHHTAVLLRRWDDGAKVKGLKVPDLQEYHTEVESCLEHS.

6 residues coordinate Fe cation: His47, His71, Asp72, His94, His117, and Asp174.

Fe(2+) serves as cofactor.

The catalysed reaction is hydroxymethylphosphonate + O2 = formate + phosphate + 2 H(+). The enzyme catalyses (1R)-(2-amino-1-hydroxyethyl)phosphonate + O2 = glycine + phosphate + 2 H(+). It carries out the reaction (1R)-(1-hydroxyethyl)phosphonate + O2 = acetate + phosphate + 2 H(+). Its function is as follows. Part of an oxidative pathway for utilization of methylphosphonic acid as a phosphate source. Catalyzes the oxidation of hydroxymethylphosphonic acid to produce formate and phosphate. Can also use (1R)-(2-amino-1-hydroxyethyl)phosphonic acid and (R)-1-hydroxyethylphosphonic acid with similar catalytic efficiency. This chain is Hydroxymethylphosphonate dioxygenase, found in Gimesia maris (strain ATCC 29201 / DSM 8797 / 534-30) (Planctomyces maris).